The chain runs to 246 residues: Ly6/PLAUR domain-containing protein 4 (246 aa).

The signal sequence occupies residues 1-26 (MGPQHLSPMQLLCLLGAISSLPWAEA). Asn-117 is a glycosylation site (N-linked (GlcNAc...) asparagine). Positions 142 to 223 (CPTCVGEHSK…INIVEKALFT (82 aa)) constitute a UPAR/Ly6 domain. Ala-225 carries GPI-anchor amidated alanine lipidation. A propeptide spans 226 to 246 (GTPCRSPSWGILLGLLFAFKG) (removed in mature form).

The protein resides in the cell membrane. This chain is Ly6/PLAUR domain-containing protein 4 (LYPD4), found in Bos taurus (Bovine).